The chain runs to 525 residues: GMP synthase [glutamine-hydrolyzing] (525 aa).

One can recognise a Glutamine amidotransferase type-1 domain in the interval 11-200 (PVLVVDFGAQ…LTEIAGLEQN (190 aa)). C88 serves as the catalytic Nucleophile. Active-site residues include H174 and E176. The GMPS ATP-PPase domain occupies 201-399 (WTAANIAEEL…LGLPEEIVNR (199 aa)). 229 to 235 (SGGVDSA) contributes to the ATP binding site.

Homodimer.

It catalyses the reaction XMP + L-glutamine + ATP + H2O = GMP + L-glutamate + AMP + diphosphate + 2 H(+). It participates in purine metabolism; GMP biosynthesis; GMP from XMP (L-Gln route): step 1/1. Catalyzes the synthesis of GMP from XMP. The protein is GMP synthase [glutamine-hydrolyzing] of Corynebacterium diphtheriae (strain ATCC 700971 / NCTC 13129 / Biotype gravis).